The primary structure comprises 555 residues: 1,3-beta-glucanosyltransferase GAS2 (555 aa).

An N-terminal signal peptide occupies residues 1–24; sequence MNKKQNFYAAIIVAIFLCLQLSHG. Cysteine 89 and cysteine 118 form a disulfide bridge. Residues tyrosine 107, 134–142, asparagine 175, glutamate 176, aspartate 217, and arginine 222 each bind (1,3-beta-D-glucosyl)n; that span reads SEPDISINR. The active-site Proton donor is the glutamate 176. Disulfide bonds link cysteine 231/cysteine 367, cysteine 247/cysteine 278, cysteine 390/cysteine 442, cysteine 392/cysteine 489, cysteine 399/cysteine 466, and cysteine 419/cysteine 424. Glutamate 275 (nucleophile) is an active-site residue. Tyrosine 307 contributes to the (1,3-beta-D-glucosyl)n binding site. Asparagine 498 is a glycosylation site (N-linked (GlcNAc...) asparagine). Aspartate 531 is lipidated: GPI-anchor amidated aspartate. The propeptide at 532–555 is removed in mature form; the sequence is GTIAFKTSGFVILLISMIAAGILL.

This sequence belongs to the glycosyl hydrolase 72 family. N-glycosylated.

Its subcellular location is the cell membrane. Splits internally a 1,3-beta-glucan molecule and transfers the newly generated reducing end (the donor) to the non-reducing end of another 1,3-beta-glucan molecule (the acceptor) forming a 1,3-beta linkage, resulting in the elongation of 1,3-beta-glucan chains in the cell wall. Involved in spore wall assembly. In Saccharomyces cerevisiae (strain ATCC 204508 / S288c) (Baker's yeast), this protein is 1,3-beta-glucanosyltransferase GAS2 (GAS2).